The sequence spans 172 residues: Achaete-scute homolog 4 (172 aa).

The bHLH domain occupies 72–124; the sequence is AFLRKRNERERQRVRCVNEGYARLRDHLPRELADKRLSKVETLRAAIDYIKHL. The segment at 144-172 is disordered; the sequence is QRRAECNSDGESKASSAPSPSSEPEEGGS. Residues 145-155 show a composition bias toward basic and acidic residues; sequence RRAECNSDGES. Residues 156 to 165 show a composition bias toward low complexity; it reads KASSAPSPSS.

As to expression, expressed in skin. 7-fold higher expression in fetal skin than in adult skin. Weak expression also detected in fetal lung, aorta and brain, and in adult stomach, kidney, ovary and breast.

It localises to the nucleus. Its function is as follows. Could be a transcriptional regulator involved in skin development. In Homo sapiens (Human), this protein is Achaete-scute homolog 4 (ASCL4).